Here is an 83-residue protein sequence, read N- to C-terminus: UPF0297 protein LCK_00468 (83 aa).

Belongs to the UPF0297 family.

The protein is UPF0297 protein LCK_00468 of Leuconostoc citreum (strain KM20).